Consider the following 340-residue polypeptide: Ketol-acid reductoisomerase (NADP(+)) (340 aa).

The region spanning 3–183 (LSVYYDKDCN…GGGRTGIIET (181 aa)) is the KARI N-terminal Rossmann domain. NADP(+) contacts are provided by residues 26 to 29 (FGSQ), Ser54, and 84 to 87 (DELQ). Residue His109 is part of the active site. NADP(+) is bound at residue Gly135. The KARI C-terminal knotted domain maps to 184–329 (TFKDETETDL…ERLRAMMPWI (146 aa)). Mg(2+) contacts are provided by Asp192, Glu196, Glu228, and Glu232. Ser253 contacts substrate.

The protein belongs to the ketol-acid reductoisomerase family. Mg(2+) is required as a cofactor.

It catalyses the reaction (2R)-2,3-dihydroxy-3-methylbutanoate + NADP(+) = (2S)-2-acetolactate + NADPH + H(+). The catalysed reaction is (2R,3R)-2,3-dihydroxy-3-methylpentanoate + NADP(+) = (S)-2-ethyl-2-hydroxy-3-oxobutanoate + NADPH + H(+). It participates in amino-acid biosynthesis; L-isoleucine biosynthesis; L-isoleucine from 2-oxobutanoate: step 2/4. The protein operates within amino-acid biosynthesis; L-valine biosynthesis; L-valine from pyruvate: step 2/4. Functionally, involved in the biosynthesis of branched-chain amino acids (BCAA). Catalyzes an alkyl-migration followed by a ketol-acid reduction of (S)-2-acetolactate (S2AL) to yield (R)-2,3-dihydroxy-isovalerate. In the isomerase reaction, S2AL is rearranged via a Mg-dependent methyl migration to produce 3-hydroxy-3-methyl-2-ketobutyrate (HMKB). In the reductase reaction, this 2-ketoacid undergoes a metal-dependent reduction by NADPH to yield (R)-2,3-dihydroxy-isovalerate. This is Ketol-acid reductoisomerase (NADP(+)) from Wolinella succinogenes (strain ATCC 29543 / DSM 1740 / CCUG 13145 / JCM 31913 / LMG 7466 / NCTC 11488 / FDC 602W) (Vibrio succinogenes).